The chain runs to 613 residues: MDLEEKLARLPDHPGVYIMHDANGAIIYVGKAASLRNRVRSYFRGQHQPRTQAMVSHVADFEYILTDNEVEALILECNLIKQHRPRYNVSLKDDKSYPYIKITTQEDFPRIQITRSVTRDGSRYFGPYTSAGSLKETLKLLRGLFPIRTCRDTPLQPRSRPCLNAHIGRCLAPCAGQVDRETYREAVDNVIMFLEGRHTALVKELKEQMEAAAARLEFEKAARLRDQLRAVQEVCEKQKLAAASGEDADAIAFAREGEAALGLIFFSRGGKVIGRDHFFLTGSEGLSRGEVMAALLKEYYSRGVEIPPEILLHDEPEDAATIASWLSRLRGGRVNLRVPKRGTKLKLLRLVHENAVSLLQEHLLTRRRQEEGSRAALLELQEILELPRLPRRMEAYDISNFQGSSQVGAMAVFVDGRPLPSAYRRFQIKTVRGPNDFASLQEVLSRRFRRAAEQDPHFADLPDFVLIDGGLGQLHAARETMEAMGVGYIPTFGLAKEEELLFRVGTSEPIRLPRESKALQILQHLRDEVHRFAITYHRQKREKTAYRSVLDDIPGVGPKRKKALLRHFGSVAAISKATLEDLLAVEGMNRTVAARILAGLGRRSDGEDSTGSP.

One can recognise a GIY-YIG domain in the interval 12–89 (DHPGVYIMHD…IKQHRPRYNV (78 aa)). In terms of domain architecture, UVR spans 199–234 (TALVKELKEQMEAAAARLEFEKAARLRDQLRAVQEV).

Belongs to the UvrC family. As to quaternary structure, interacts with UvrB in an incision complex.

The protein resides in the cytoplasm. The UvrABC repair system catalyzes the recognition and processing of DNA lesions. UvrC both incises the 5' and 3' sides of the lesion. The N-terminal half is responsible for the 3' incision and the C-terminal half is responsible for the 5' incision. This Moorella thermoacetica (strain ATCC 39073 / JCM 9320) protein is UvrABC system protein C.